A 975-amino-acid polypeptide reads, in one-letter code: Protein bicaudal D homolog 1 (975 aa).

2 coiled-coil regions span residues Met-1 to Ile-265 and Ser-319 to Glu-496. Disordered regions lie at residues Ser-383 to Ala-403, Arg-545 to Ser-616, Asp-800 to Glu-824, Leu-836 to Leu-877, and Asp-922 to Pro-975. Composition is skewed to basic and acidic residues over residues Lys-385–Ala-403 and Val-581–Lys-590. Over residues Pro-592–Pro-602 the composition is skewed to polar residues. The stretch at Ile-663–Gln-803 forms a coiled coil. The segment at Ile-663 to Gln-803 is interaction with RAB6A. A compositionally biased stretch (polar residues) spans Gln-840–Leu-877.

It belongs to the BicD family. As to quaternary structure, interacts with RAB6A. Interacts (via C-terminus) with RAB6B (GTP-bound); the interaction is direct. Interacts with CLIP-115 and KIFC2. (Microbial infection) Interacts with human cytomegalovirus/HHV-5 protein UL32. As to expression, expressed in the brain, heart and skeletal muscle.

It localises to the golgi apparatus. In terms of biological role, regulates coat complex coatomer protein I (COPI)-independent Golgi-endoplasmic reticulum transport by recruiting the dynein-dynactin motor complex. This chain is Protein bicaudal D homolog 1 (BICD1), found in Homo sapiens (Human).